The chain runs to 547 residues: Cytochrome P450 monooxygenase cpsD (547 aa).

Residues 18–38 traverse the membrane as a helical segment; the sequence is LTGAALVVTLITSVIIVAADL. A heme-binding site is contributed by Cys-476. The segment at 528–547 is disordered; that stretch reads RRRDARRTHEALGSKLKPEE. The segment covering 534–547 has biased composition (basic and acidic residues); the sequence is RTHEALGSKLKPEE.

Belongs to the cytochrome P450 family. The cofactor is heme.

It is found in the membrane. The enzyme catalyses campesine B + campesine C + reduced [NADPH--hemoprotein reductase] + O2 = campesine D + oxidized [NADPH--hemoprotein reductase] + 2 H2O + 2 H(+). The catalysed reaction is 2 campesine B + reduced [NADPH--hemoprotein reductase] + O2 = campesine F + oxidized [NADPH--hemoprotein reductase] + 2 H2O + H(+). It catalyses the reaction campesine C + campesine A + reduced [NADPH--hemoprotein reductase] + O2 = campesine E + oxidized [NADPH--hemoprotein reductase] + 2 H2O + 2 H(+). It functions in the pathway alkaloid biosynthesis. Cytochrome P450 monooxygenase; part of the gene cluster that mediates the biosynthesis of campesine G, a dimeric indole piperazine alkaloid that shows good insecticidal activity Galleria mellonella. Within the pathway, cpsD acts as a dimerase that simultaneously catalyzes one C-C bond (C3-C3') and two C-N bonds (C2-N16' and C2'-N16) coupling reactions between campesines B and C to produce a heterodimer with unexpected 6/5/6/6/6/6/5/6 eight-ring scaffold called campesine D. CpsD is also able to catalyze oxidative heterocoupling od campesines A with B to produce campesine F and campesines A with C to produce campesine E. The non-canonical non-ribosomal peptide synthetase cpsA catalyzes the first steps of the pathway by producing L-tryptophanal and L-valinal from their respective amino-acids. These products condensate spontaneously to form trypyl-valyl pyrazine also known as didehydrocampesine A. The NmrA-like family domain-containing oxidoreductase cpsB is the next enzyme in cps pathway and reduces the unstable didehydrocampesine A to campesine A. The methyltransferase cpsF and the acetyltransferase cpsE both recognize N13 of piperazine ring to carry out methylation and acetylation of campesine A to produce campesine C and B, respectively. The cytochrome P450 monooxygenase cpsD then acts as a dimerase that catalyzes oxidative heterocoupling between campesine B and C to produce heterodimers with unexpected 6/5/6/6/6/6/5/6 eight-ring scaffold called campesine D. Finally,the cytochrome P450 monooxygenase cpsC is a regioselective dehydrogenase that catalyzes dehydrogenation reaction towards C2-N1 to produce campesine G. The sequence is that of Cytochrome P450 monooxygenase cpsD from Aspergillus campestris (strain IBT 28561).